Reading from the N-terminus, the 75-residue chain is Conotoxin Vn5.5 (75 aa).

Positions 1 to 19 are cleaved as a signal peptide; that stretch reads MLCLPVFIILLLLASPAAP. Residues 20 to 59 constitute a propeptide that is removed on maturation; the sequence is NPLEKRIQSDLIRAALEDADMKTDEREIVNIIDSISDVAK. Gln60 bears the Pyrrolidone carboxylic acid mark.

Belongs to the conotoxin T superfamily. Post-translationally, contains 2 disulfide bonds that can be either 'C1-C3, C2-C4' or 'C1-C4, C2-C3', since these disulfide connectivities have been observed for conotoxins with cysteine framework V (for examples, see AC P0DQQ7 and AC P81755). In terms of tissue distribution, expressed by the venom duct.

Its subcellular location is the secreted. This is Conotoxin Vn5.5 from Conus ventricosus (Mediterranean cone).